A 158-amino-acid chain; its full sequence is Methylglyoxal synthase (158 aa).

The MGS-like domain maps to 1–158 (MRRKLRIALV…AFEESLKVKE (158 aa)). Substrate-binding positions include histidine 12, lysine 16, 38 to 41 (TGTT), and 63 to 64 (SG). The active-site Proton donor/acceptor is aspartate 69. Histidine 96 contacts substrate.

This sequence belongs to the methylglyoxal synthase family.

The enzyme catalyses dihydroxyacetone phosphate = methylglyoxal + phosphate. Functionally, catalyzes the formation of methylglyoxal from dihydroxyacetone phosphate. The polypeptide is Methylglyoxal synthase (Treponema socranskii).